A 283-amino-acid polypeptide reads, in one-letter code: Acyl-coenzyme A diphosphatase FITM2 (283 aa).

Positions 1–11 are enriched in low complexity; sequence MSTRRSSTRAD. Residues 1 to 21 are disordered; it reads MSTRRSSTRADSTTKRPASPN. The Cytoplasmic portion of the chain corresponds to 1–39; it reads MSTRRSSTRADSTTKRPASPNSTPNAALGIFVAIARQIL. Residues 40 to 60 form a helical membrane-spanning segment; that stretch reads FIDARKVALFYLAFVTVLSFI. The Lumenal portion of the chain corresponds to 61–81; it reads ESRIELDSTYYLVQKHSVLNQ. Residues 82–102 form a helical membrane-spanning segment; it reads YGVKMGWFWTLVIVGPFIWFS. Residues 103–120 lie on the Cytoplasmic side of the membrane; it reads SKAHNRRDRDQPIVDVCR. Residues 121-141 form a helical membrane-spanning segment; it reads LGVGTACWYFSVQFFHKVLAL. At 142–168 the chain is on the lumenal side; the sequence is TSMCDKGRTLTRAQCSEKEGVWTPGYD. A helical transmembrane segment spans residues 169-189; sequence ISGHCFLMIYSILIITEEAIA. H172 is an active-site residue. The Cytoplasmic portion of the chain corresponds to 190–219; that stretch reads YRHYQQVTDAVHQMDGDREEHDRLTRCIQY. 2 consecutive transmembrane segments (helical) span residues 220–240 and 241–261; these read FFVA…ISVL and YYHI…CWFV. The active site involves H243. Residues 262–283 are Cytoplasmic-facing; it reads TYRMLYPAGFLASPIRRTVGRK.

It belongs to the FIT family. FIT2 subfamily.

It localises to the endoplasmic reticulum membrane. The catalysed reaction is an acyl-CoA + H2O = an acyl-4'-phosphopantetheine + adenosine 3',5'-bisphosphate + 2 H(+). In terms of biological role, fatty acyl-coenzyme A (CoA) diphosphatase that hydrolyzes fatty acyl-CoA to yield acyl-4'-phosphopantetheine and adenosine 3',5'-bisphosphate. Preferentially hydrolyzes unsaturated long-chain acyl-CoA substrates in the endoplasmic reticulum (ER) lumen. This catalytic activity is required for maintaining ER structure and for lipid droplets (LDs) biogenesis, which are lipid storage organelles involved in maintaining lipid and energy homeostasis. May directly bind to diacylglycerol (DAGs) and triacylglycerol, which is also important for LD biogenesis. May support directional budding of nacent LDs from the ER into the cytosol by reducing DAG levels at sites of LD formation. May play a role in the regulation of cell morphology, ER morphology and cytoskeletal organization. This Caenorhabditis elegans protein is Acyl-coenzyme A diphosphatase FITM2.